The following is a 59-amino-acid chain: MAKIQITLTRSIIGRPETQRKTVKALGLTKMHSSVEVEDNPAIRGQINKVSHLVTVKEL.

This sequence belongs to the universal ribosomal protein uL30 family. In terms of assembly, part of the 50S ribosomal subunit.

This Macrococcus caseolyticus (strain JCSC5402) (Macrococcoides caseolyticum) protein is Large ribosomal subunit protein uL30.